A 360-amino-acid chain; its full sequence is Peptide chain release factor 1 (360 aa).

Residue Gln235 is modified to N5-methylglutamine. The interval Ala284–Pro313 is disordered.

Belongs to the prokaryotic/mitochondrial release factor family. In terms of processing, methylated by PrmC. Methylation increases the termination efficiency of RF1.

The protein localises to the cytoplasm. In terms of biological role, peptide chain release factor 1 directs the termination of translation in response to the peptide chain termination codons UAG and UAA. The chain is Peptide chain release factor 1 from Salmonella arizonae (strain ATCC BAA-731 / CDC346-86 / RSK2980).